We begin with the raw amino-acid sequence, 442 residues long: D-galactonate dehydratase family member SSBG_02010 (442 aa).

Aspartate 246 serves as a coordination point for Mg(2+). Residue histidine 248 participates in D-arabinonate binding. 2 residues coordinate Mg(2+): glutamate 272 and glutamate 298. 4 residues coordinate D-arabinonate: glutamate 298, arginine 319, histidine 348, and glutamate 375.

Belongs to the mandelate racemase/muconate lactonizing enzyme family. GalD subfamily.

Its function is as follows. Has no detectable activity with D-mannonate and with a panel of 70 other acid sugars (in vitro), in spite of the conservation of the residues that are expected to be important for catalytic activity and cofactor binding. May have evolved a divergent function. The polypeptide is D-galactonate dehydratase family member SSBG_02010 (Streptomyces sp. (strain SPB074)).